We begin with the raw amino-acid sequence, 370 residues long: Phospho-2-dehydro-3-deoxyheptonate aldolase, phenylalanine-inhibited (370 aa).

Belongs to the class-I DAHP synthase family.

It catalyses the reaction D-erythrose 4-phosphate + phosphoenolpyruvate + H2O = 7-phospho-2-dehydro-3-deoxy-D-arabino-heptonate + phosphate. It functions in the pathway metabolic intermediate biosynthesis; chorismate biosynthesis; chorismate from D-erythrose 4-phosphate and phosphoenolpyruvate: step 1/7. Its activity is regulated as follows. Inhibited by phenyalanine. In terms of biological role, stereospecific condensation of phosphoenolpyruvate (PEP) and D-erythrose-4-phosphate (E4P) giving rise to 3-deoxy-D-arabino-heptulosonate-7-phosphate (DAHP). The protein is Phospho-2-dehydro-3-deoxyheptonate aldolase, phenylalanine-inhibited (ARO3) of Saccharomyces cerevisiae (strain ATCC 204508 / S288c) (Baker's yeast).